The sequence spans 196 residues: Holliday junction branch migration complex subunit RuvA (196 aa).

The segment at 1–63 (MINKIYGKII…EDEIKLFGFL (63 aa)) is domain I. A domain II region spans residues 64–138 (NVSEREVFEE…GKLVKADELT (75 aa)). Position 138 (threonine 138) is a region of interest, flexible linker. The interval 139–196 (SSVFKFKDLEQSIVNMGFDRKLVVAAIKEIMLIDEFLMLREVEQEQFLFRETLKRLSG) is domain III.

Belongs to the RuvA family. As to quaternary structure, homotetramer. Forms an RuvA(8)-RuvB(12)-Holliday junction (HJ) complex. HJ DNA is sandwiched between 2 RuvA tetramers; dsDNA enters through RuvA and exits via RuvB. An RuvB hexamer assembles on each DNA strand where it exits the tetramer. Each RuvB hexamer is contacted by two RuvA subunits (via domain III) on 2 adjacent RuvB subunits; this complex drives branch migration. In the full resolvosome a probable DNA-RuvA(4)-RuvB(12)-RuvC(2) complex forms which resolves the HJ.

The protein localises to the cytoplasm. Functionally, the RuvA-RuvB-RuvC complex processes Holliday junction (HJ) DNA during genetic recombination and DNA repair, while the RuvA-RuvB complex plays an important role in the rescue of blocked DNA replication forks via replication fork reversal (RFR). RuvA specifically binds to HJ cruciform DNA, conferring on it an open structure. The RuvB hexamer acts as an ATP-dependent pump, pulling dsDNA into and through the RuvAB complex. HJ branch migration allows RuvC to scan DNA until it finds its consensus sequence, where it cleaves and resolves the cruciform DNA. This Borrelia hermsii (strain HS1 / DAH) protein is Holliday junction branch migration complex subunit RuvA.